We begin with the raw amino-acid sequence, 30 residues long: Brevinin-2Rj (30 aa).

Cys-24 and Cys-30 are oxidised to a cystine.

In terms of tissue distribution, expressed by the skin glands.

It is found in the secreted. In terms of biological role, antimicrobial peptide. This Pelophylax ridibundus (Marsh frog) protein is Brevinin-2Rj.